Here is a 352-residue protein sequence, read N- to C-terminus: Protein MGF 360-16R (352 aa).

Belongs to the asfivirus MGF 360 family.

Plays a role in virus cell tropism, and may be required for efficient virus replication in macrophages. This is Protein MGF 360-16R from African swine fever virus (isolate Tick/South Africa/Pretoriuskop Pr4/1996) (ASFV).